Reading from the N-terminus, the 387-residue chain is Alkanesulfonate monooxygenase (387 aa).

Belongs to the SsuD family.

The catalysed reaction is an alkanesulfonate + FMNH2 + O2 = an aldehyde + FMN + sulfite + H2O + 2 H(+). Catalyzes the desulfonation of aliphatic sulfonates. This is Alkanesulfonate monooxygenase from Cupriavidus necator (strain ATCC 17699 / DSM 428 / KCTC 22496 / NCIMB 10442 / H16 / Stanier 337) (Ralstonia eutropha).